Here is a 343-residue protein sequence, read N- to C-terminus: uncharacterized protein (343 aa).

Belongs to the IIV-6 219L family.

This is an uncharacterized protein from Invertebrate iridescent virus 6 (IIV-6).